Reading from the N-terminus, the 200-residue chain is Pre-mRNA cleavage factor Im 25 kDa subunit 2 (200 aa).

One can recognise a Nudix hydrolase domain in the interval 45-172; it reads GMRTSVEGIL…KLLAVPLFEL (128 aa). Positions 72-74 are interaction with RNA; that stretch reads TFC. The Nudix box signature appears at 79 to 100; sequence GRLKPGENEADGLKRKLTSKLG.

The protein belongs to the Nudix hydrolase family. CPSF5 subfamily. Homodimer. Component of the cleavage factor Im (CFIm) complex. Forms a complex with cleavage and polyadenylation specificity factor (CPSF) subunits FIPS5, PAPS4 and CPSF30.

It is found in the nucleus. Component of the cleavage factor Im (CFIm) complex that plays a key role in pre-mRNA 3'-processing. Involved in association with CPSF6 or CPSF7 in pre-MRNA 3'-end poly(A) site cleavage and poly(A) addition. NUDT21/CPSF5 binds to cleavage and polyadenylation RNA substrates. The homodimer mediates simultaneous sequence-specific recognition of two 5'-UGUA-3' elements within the pre-mRNA. Binds to, but does not hydrolyze mono- and di-adenosine nucleotides. May have a role in mRNA export. This chain is Pre-mRNA cleavage factor Im 25 kDa subunit 2, found in Arabidopsis thaliana (Mouse-ear cress).